The following is a 317-amino-acid chain: Acetyl-coenzyme A carboxylase carboxyl transferase subunit alpha (317 aa).

The CoA carboxyltransferase C-terminal domain maps to 40–293; that stretch reads LEVRVREAIL…GDVIANALAE (254 aa).

This sequence belongs to the AccA family. As to quaternary structure, acetyl-CoA carboxylase is a heterohexamer composed of biotin carboxyl carrier protein (AccB), biotin carboxylase (AccC) and two subunits each of ACCase subunit alpha (AccA) and ACCase subunit beta (AccD).

The protein localises to the cytoplasm. It catalyses the reaction N(6)-carboxybiotinyl-L-lysyl-[protein] + acetyl-CoA = N(6)-biotinyl-L-lysyl-[protein] + malonyl-CoA. The protein operates within lipid metabolism; malonyl-CoA biosynthesis; malonyl-CoA from acetyl-CoA: step 1/1. Its function is as follows. Component of the acetyl coenzyme A carboxylase (ACC) complex. First, biotin carboxylase catalyzes the carboxylation of biotin on its carrier protein (BCCP) and then the CO(2) group is transferred by the carboxyltransferase to acetyl-CoA to form malonyl-CoA. The protein is Acetyl-coenzyme A carboxylase carboxyl transferase subunit alpha of Rhizobium etli (strain CIAT 652).